An 83-amino-acid polypeptide reads, in one-letter code: Omega-agatoxin-Aa4b (83 aa).

Residues M1 to A20 form the signal peptide. The propeptide occupies T21–R35. Disulfide bonds link C39/C55, C47/C60, C54/C71, and C62/C69. S81 carries the post-translational modification D-serine (Ser).

Belongs to the neurotoxin 02 (plectoxin) family. 03 (omega-agtx) subfamily. In terms of processing, the toxin with D-Ser (named omega-aga IVC) is 80-90 fold more potent than that with L-Ser (omega-aga IVB) against Cav2.1/CACNA1A (P-type) channels in rat cerebellar Purkinje neurons and is more resistant to proteases. The epimerization is done by the venom peptide isomerase heterodimer. As to expression, expressed by the venom gland.

The protein localises to the secreted. Functionally, antagonist of voltage-gated Cav2.1/CACNA1A (P-type) calcium channels. Paralyzes insect by blocking neuromuscular transmission. This is Omega-agatoxin-Aa4b from Agelenopsis aperta (North American funnel-web spider).